Consider the following 373-residue polypeptide: 3-isopropylmalate dehydrogenase AMT6 (373 aa).

NADP(+) is bound at residue 77-79; that stretch reads VGG. The substrate site is built by R97 and R136. Residues D227, D252, and D256 each contribute to the Mg(2+) site. NADP(+) is bound at residue 284–289; sequence SRIRGL.

Belongs to the isocitrate and isopropylmalate dehydrogenases family. In terms of assembly, homodimer. Mg(2+) serves as cofactor. Requires Mn(2+) as cofactor.

It carries out the reaction (2R,3S)-3-isopropylmalate + NAD(+) = 4-methyl-2-oxopentanoate + CO2 + NADH. The protein operates within amino-acid biosynthesis; L-leucine biosynthesis; L-leucine from 3-methyl-2-oxobutanoate: step 3/4. Its pathway is mycotoxin biosynthesis. Its function is as follows. 3-isopropylmalate dehydrogenase; part of the gene clusters that mediate the biosynthesis of AM-toxins, host-selective toxins (HSTs) causing Alternaria blotch on apple, a worldwide distributed disease. AM-toxins are cyclic depsipeptides containing the 3 residues 2-hydroxy-isovaleric acid (2-HIV), dehydroalanine, L-alanine which are common for all 3 AM-toxins I to III. The fourth precursor is L-alpha-amino-methoxyphenyl-valeric acid (L-Amv) for AM-toxin I, L-alpha-amino-phenyl-valeric acid (L-Apv) for AM-toxin II, and L-alpha-amino-hydroxyphenyl-valeric acid (L-Ahv) for AM-toxin III. AM-toxins have two target sites for affecting susceptible apple cells; they cause invagination of the plasma membrane and electrolyte loss and chloroplast disorganization. The non-ribosomal peptide synthetase AMT1 contains 4 catalytic modules and is responsible for activation of each residue in AM-toxin. The aldo-keto reductase AMT2 catalyzes the conversion of 2-keto-isovaleric acid (2-KIV) to 2-hydroxy-isovaleric acid (2-HIV), one of the precursor residues incorporated by AMT1 during AM-toxin biosynthesis, by reduction of its ketone to an alcohol. The cytochrome P450 monooxygenase AMT3 and the thioesterase AMT4 are also important for AM-toxin production, but their exact function within the AM-toxin biosynthesis are not known yet. Up to 21 proteins (including AMT1 to AMT4) are predicted to be involved in AM-toxin biosynthesis since their expression ishighly up-regulated in AM-toxin-producing cultures. The chain is 3-isopropylmalate dehydrogenase AMT6 from Alternaria alternata (Alternaria rot fungus).